Consider the following 892-residue polypeptide: Transmembrane channel-like protein 2-B (892 aa).

The interval 29–125 (GINQNLRREE…DESMSEGEMA (97 aa)) is disordered. Basic residues-rich tracts occupy residues 48 to 58 (RRAKKRRMNRR) and 66 to 77 (RSKKMRMRVRKN). The span at 103 to 112 (PSSCSSSSDN) shows a compositional bias: low complexity. Transmembrane regions (helical) follow at residues 235–255 (LVLF…MGIP), 275–295 (FSVL…YGFY), 308–328 (LPLS…MVVI), 403–423 (LANV…YAVV), 444–464 (EVEI…EAIA), 482–502 (IFAL…DEVN), 616–636 (LIFN…LVGI), 671–691 (FYMG…IYSI), and 736–756 (GLII…LNAV). Residues 772–785 (QMQRDEEKNRRNNK) show a composition bias toward basic and acidic residues. Disordered regions lie at residues 772 to 791 (QMQR…TNQV) and 796 to 892 (EDLL…PPRR). Positions 862-878 (PRQPGPLPGNPRGPPPG) are enriched in pro residues.

The protein belongs to the TMC family. As to expression, in adults, expression is restricted to the hair cells of inner ear and lateral line organ. Expressed at higher levels in the larval lateral-line neuromasts than in the larval inner ear.

Its subcellular location is the membrane. Functionally, probable component of the mechanotransducer (MET) non-selective cation channel. The polypeptide is Transmembrane channel-like protein 2-B (Danio rerio (Zebrafish)).